A 263-amino-acid polypeptide reads, in one-letter code: Glucosamine-6-phosphate deaminase 2 (263 aa).

Asp-82 serves as the catalytic Proton acceptor; for enolization step. Asn-151 functions as the For ring-opening step in the catalytic mechanism. His-153 acts as the Proton acceptor; for ring-opening step in catalysis. The active-site For ring-opening step is the Glu-158.

The protein belongs to the glucosamine/galactosamine-6-phosphate isomerase family. As to quaternary structure, homohexamer.

It carries out the reaction alpha-D-glucosamine 6-phosphate + H2O = beta-D-fructose 6-phosphate + NH4(+). Its function is as follows. Catalyzes the reversible conversion of alpha-D-glucosamine 6-phosphate (GlcN-6P) into beta-D-fructose 6-phosphate (Fru-6P) and ammonium ion, a regulatory reaction step in de novo uridine diphosphate-N-acetyl-alpha-D-glucosamine (UDP-GlcNAc) biosynthesis via hexosamine pathway. The chain is Glucosamine-6-phosphate deaminase 2 (GPI2) from Giardia intestinalis (Giardia lamblia).